The chain runs to 78 residues: Beta-defensin 105 (78 aa).

The signal sequence occupies residues 1–27 (MALIRKTFYFLFAMFFILVQLPSGCQA). Intrachain disulfides connect Cys43–Cys74, Cys53–Cys67, and Cys57–Cys73.

It belongs to the beta-defensin family. In terms of tissue distribution, specifically expressed in testis.

Its subcellular location is the secreted. In terms of biological role, has antibacterial activity. The chain is Beta-defensin 105 (DEFB105A) from Homo sapiens (Human).